A 406-amino-acid chain; its full sequence is 4-hydroxy-3-methylbut-2-en-1-yl diphosphate synthase (ferredoxin) (406 aa).

4 residues coordinate [4Fe-4S] cluster: Cys-313, Cys-316, Cys-347, and Glu-354.

This sequence belongs to the IspG family. Requires [4Fe-4S] cluster as cofactor.

It carries out the reaction (2E)-4-hydroxy-3-methylbut-2-enyl diphosphate + 2 oxidized [2Fe-2S]-[ferredoxin] + H2O = 2-C-methyl-D-erythritol 2,4-cyclic diphosphate + 2 reduced [2Fe-2S]-[ferredoxin] + H(+). It functions in the pathway isoprenoid biosynthesis; isopentenyl diphosphate biosynthesis via DXP pathway; isopentenyl diphosphate from 1-deoxy-D-xylulose 5-phosphate: step 5/6. Converts 2C-methyl-D-erythritol 2,4-cyclodiphosphate (ME-2,4cPP) into 1-hydroxy-2-methyl-2-(E)-butenyl 4-diphosphate. The polypeptide is 4-hydroxy-3-methylbut-2-en-1-yl diphosphate synthase (ferredoxin) (Picosynechococcus sp. (strain ATCC 27264 / PCC 7002 / PR-6) (Agmenellum quadruplicatum)).